The sequence spans 383 residues: Opsin Rh4 (383 aa).

Topologically, residues 1–57 (MDIAGSLCNASEGPVLRPEARVSGNGDLQFLGWNVPPDQIQHIPEHWLTQLEPPASM) are extracellular. N-linked (GlcNAc...) asparagine glycosylation occurs at Asn9. A helical transmembrane segment spans residues 58–82 (HYMLGVFYIFLFCASTVGNGMVIWI). Topologically, residues 83-94 (FSTSKALRTPSN) are cytoplasmic. The chain crosses the membrane as a helical span at residues 95–117 (MFVLNLAVFDFIMCLKAPIFIYN). The Extracellular segment spans residues 118–133 (SFHRGFALGNTGCQIF). Residues Cys130 and Cys207 are joined by a disulfide bond. Residues 134-153 (AAIGSYSGIGAGMTNAAIGY) traverse the membrane as a helical segment. Residues 154-171 (DRLNVITKPMNRNMTFTK) are Cytoplasmic-facing. The chain crosses the membrane as a helical span at residues 172–196 (AIIMNVIIWLYCTPWVVLPLTQFWD). Over 197 to 220 (RFVPEGYLTSCTFDYLTDNFDTRL) the chain is Extracellular. The chain crosses the membrane as a helical span at residues 221-248 (FVGTIFFFSFVCPTLMIIYYYSQIVGHV). Residues 249 to 284 (FSHEKALREQAKKMNVESLRSNVDKSKDTAEIRIAK) lie on the Cytoplasmic side of the membrane. A helical membrane pass occupies residues 285–308 (AAITICFLFFVSWTPYGVMSLIGA). Topologically, residues 309–316 (FGDKSLLT) are extracellular. A helical membrane pass occupies residues 317-341 (PGATMIPACTCKLVACIDPFVYAIS). Residue Lys328 is modified to N6-(retinylidene)lysine. The Cytoplasmic segment spans residues 342–383 (HPRYRMELQKRCPWLAIDEKAPESSSAASTTTTQEQQQTTAA). The segment at 361 to 383 (KAPESSSAASTTTTQEQQQTTAA) is disordered. Over residues 364–383 (ESSSAASTTTTQEQQQTTAA) the composition is skewed to low complexity.

It belongs to the G-protein coupled receptor 1 family. Opsin subfamily. Phosphorylated on some or all of the serine and threonine residues present in the C-terminal region.

It localises to the membrane. Visual pigments are the light-absorbing molecules that mediate vision. They consist of an apoprotein, opsin, covalently linked to cis-retinal. The sequence is that of Opsin Rh4 (Rh4) from Drosophila virilis (Fruit fly).